Reading from the N-terminus, the 309-residue chain is Ribonuclease Z (309 aa).

Zn(2+) contacts are provided by His63, His65, Asp67, His68, His141, Asp212, and His270. The Proton acceptor role is filled by Asp67.

Belongs to the RNase Z family. Homodimer. The cofactor is Zn(2+).

The enzyme catalyses Endonucleolytic cleavage of RNA, removing extra 3' nucleotides from tRNA precursor, generating 3' termini of tRNAs. A 3'-hydroxy group is left at the tRNA terminus and a 5'-phosphoryl group is left at the trailer molecule.. Its function is as follows. Zinc phosphodiesterase, which displays some tRNA 3'-processing endonuclease activity. Probably involved in tRNA maturation, by removing a 3'-trailer from precursor tRNA. This Limosilactobacillus reuteri (strain DSM 20016) (Lactobacillus reuteri) protein is Ribonuclease Z.